Consider the following 473-residue polypeptide: Mogroside IIIx synthase (473 aa).

Catalysis depends on histidine 43, which acts as the Proton acceptor. Aspartate 142 (charge relay) is an active-site residue. UDP-alpha-D-glucose is bound by residues serine 293, glutamine 356, tryptophan 374, asparagine 375, serine 376, glutamate 379, aspartate 395, and glutamine 396.

The protein belongs to the UDP-glycosyltransferase family. As to expression, highly expressed in mature fruits.

The catalysed reaction is mogroside IIE + UDP-alpha-D-glucose = mogroside IIIX + UDP + H(+). The enzyme catalyses mogroside III + UDP-alpha-D-glucose = mogroside IV + UDP + H(+). It catalyses the reaction mogroside III + UDP-alpha-D-glucose = siamenoside I + UDP + H(+). It carries out the reaction mogroside IIIX + UDP-alpha-D-glucose = mogroside IVA + UDP + H(+). The catalysed reaction is mogroside IIIX + UDP-alpha-D-glucose = siamenoside I + UDP + H(+). The enzyme catalyses mogroside IV + UDP-alpha-D-glucose = mogroside V + UDP + H(+). It catalyses the reaction siamenoside I + UDP-alpha-D-glucose = mogroside V + UDP + H(+). It carries out the reaction mogroside V + UDP-alpha-D-glucose = mogroside VI + UDP + H(+). Its pathway is secondary metabolite biosynthesis; terpenoid biosynthesis. Activity is increased by Mg(2+). Functionally, UDP-glycosyltransferase involved in the biosynthesis of cucurbitacin and mogroside tetracyclic triterpene natural products (e.g. siamenoside I and mogrosides IV, V and VI). Cucurbitacins have cytotoxic properties and exhibit deterrent taste as a defense barrier against herbivores. Mogrosides are nonsugar highly oxygenated compounds used as high-intensity zero-calorie sweeteners; they also possess pharmacological properties such as regulating immunity, lowering blood sugar and lipid levels, protecting the liver, and acting as antioxidants and antitumor agents. In terms of biological role, catalyzes the branched glucosylations of mogroside II-E, mogroside III, mogroside IIIx, mogroside IV, mogroside IV-A, siamenoside I and mogroside V, ending in the production of mogroside VI. Its function is as follows. Catalyzes the beta(1-6) branched glucosylations of mogroside II-E to produce mogroside IIIx by forming a beta(1-6) glycosidic bond with the 6-hydroxyl of glucose 1-C24; a subsequent glycosylation at glucose 1-C3 leads to the formation of mogroside IV-A with beta(1-6) glycosidic bond. Can also use mogroside III-E, mogroside III-A, mogroside IV-E and mogroside IV-A as substrates. This chain is Mogroside IIIx synthase, found in Siraitia grosvenorii (Monk's fruit).